The sequence spans 426 residues: Putative acid phosphatase 1 (426 aa).

Positions 1–18 (MRVLFYVFPFVIFALSQA) are cleaved as a signal peptide. Over 19-388 (QLISVHVIFR…HNWTMTTVSW (370 aa)) the chain is Extracellular. H29 functions as the Nucleophile in the catalytic mechanism. N-linked (GlcNAc...) asparagine glycosylation is found at N37 and N145. C133 and C369 are oxidised to a cystine. Residue D276 is the Proton donor of the active site. N-linked (GlcNAc...) asparagine glycosylation occurs at N380. The helical transmembrane segment at 389–409 (ILIGISAFLLIILIIMSYLAV) threads the bilayer. Residues 410 to 426 (RYKNRSVVTIKKVCLEN) lie on the Cytoplasmic side of the membrane.

Belongs to the histidine acid phosphatase family.

Its subcellular location is the membrane. The catalysed reaction is a phosphate monoester + H2O = an alcohol + phosphate. The sequence is that of Putative acid phosphatase 1 from Caenorhabditis briggsae.